The sequence spans 558 residues: REST corepressor spr-1 (558 aa).

Residues 1-106 are disordered; sequence MDLYDDDGES…KVKGPLSNTN (106 aa). The segment covering 36-56 has biased composition (acidic residues); the sequence is TIEENVPEVEENTLLEEDSLV. Over residues 69 to 80 the composition is skewed to basic residues; the sequence is KPSKSKRKRKRS. Residues 107–192 enclose the ELM2 domain; it reads KEINVGTEFQ…SAIAEVARRN (86 aa). The 52-residue stretch at 193-244 folds into the SANT 1 domain; it reads ELKDVWTDQEITLFENCYQIFGKNFSQIRSALCHRSLQSIVQFYYESKKRVK. A GATA-type zinc finger spans residues 271–325; the sequence is AIFESMCDNCGEKAENMQINNAMNRPECRACLIYFNQTGVPRPTSLRLVLAERIR. The segment covering 378–402 has biased composition (polar residues); it reads CTENGNVGETSSPSAQKTEIQSESD. The disordered stretch occupies residues 378–406; it reads CTENGNVGETSSPSAQKTEIQSESDGSGP. An SANT 2 domain is found at 481-532; that stretch reads HYSQDWTQLERSQVIRCFNMYGAHFEHIADVIGTKTPDQVYQFYLENQKAID.

It belongs to the CoREST family. In terms of assembly, probably part of a large repressor complex. Interacts with histone demethylase spr-5/lsd-1.

The protein resides in the nucleus. Its function is as follows. Probable corepressor protein, which probably participates in the transcriptional repression of the presenilin protein hop-1. Probably acts via the formation of a multiprotein complex that deacetylates and demethylates specific sites on histones. Acts redundantly with the transcriptional repressor lin-35 to play a role in vulval morphogenesis and promote germline proliferation. The protein is REST corepressor spr-1 of Caenorhabditis elegans.